A 118-amino-acid polypeptide reads, in one-letter code: V-type proton ATPase subunit G 1 (118 aa).

Residue Ala-2 is modified to N-acetylalanine. Residues Ala-19–Ala-42 form a disordered region.

The protein belongs to the V-ATPase G subunit family. In terms of assembly, V-ATPase is a heteromultimeric enzyme made up of two complexes: the ATP-hydrolytic V1 complex and the proton translocation V0 complex. The V1 complex consists of three catalytic AB heterodimers that form a heterohexamer, three peripheral stalks each consisting of EG heterodimers, one central rotor including subunits D and F, and the regulatory subunits C and H. The proton translocation complex V0 consists of the proton transport subunit a, a ring of proteolipid subunits c9c'', rotary subunit d, subunits e and f, and the accessory subunits ATP6AP1/Ac45 and ATP6AP2/PRR. Brain, heart, kidney and spleen.

The protein localises to the apical cell membrane. Subunit of the V1 complex of vacuolar(H+)-ATPase (V-ATPase), a multisubunit enzyme composed of a peripheral complex (V1) that hydrolyzes ATP and a membrane integral complex (V0) that translocates protons. V-ATPase is responsible for acidifying and maintaining the pH of intracellular compartments and in some cell types, is targeted to the plasma membrane, where it is responsible for acidifying the extracellular environment. In aerobic conditions, involved in intracellular iron homeostasis, thus triggering the activity of Fe(2+) prolyl hydroxylase (PHD) enzymes, and leading to HIF1A hydroxylation and subsequent proteasomal degradation. The sequence is that of V-type proton ATPase subunit G 1 (ATP6V1G1) from Bos taurus (Bovine).